A 395-amino-acid chain; its full sequence is F-box only protein 7 (395 aa).

In terms of domain architecture, F-box spans 19–70; it reads NHDWSKLCPDILRKIIESLSSLDFYRAKIVCSDWYSVWKTCVKRPLRPWRII.

In Arabidopsis thaliana (Mouse-ear cress), this protein is F-box only protein 7 (FBX7).